Consider the following 155-residue polypeptide: Endoribonuclease YbeY (155 aa).

Residues His-119, His-123, and His-129 each contribute to the Zn(2+) site.

The protein belongs to the endoribonuclease YbeY family. It depends on Zn(2+) as a cofactor.

It is found in the cytoplasm. Single strand-specific metallo-endoribonuclease involved in late-stage 70S ribosome quality control and in maturation of the 3' terminus of the 16S rRNA. The protein is Endoribonuclease YbeY of Mycoplasmopsis synoviae (strain 53) (Mycoplasma synoviae).